The sequence spans 141 residues: NADH dehydrogenase [ubiquinone] 1 alpha subcomplex subunit 11 (141 aa).

Ala-2 is subject to N-acetylalanine. A run of 2 helical transmembrane segments spans residues 22–43 (TYATTSIGGAAGLVVSAYSVAL) and 58–80 (RYTFTAAAIGAIFGLTSCISAQV).

Complex I is composed of 45 different subunits.

It localises to the mitochondrion inner membrane. Accessory subunit of the mitochondrial membrane respiratory chain NADH dehydrogenase (Complex I), that is believed not to be involved in catalysis. Complex I functions in the transfer of electrons from NADH to the respiratory chain. The immediate electron acceptor for the enzyme is believed to be ubiquinone. The polypeptide is NADH dehydrogenase [ubiquinone] 1 alpha subcomplex subunit 11 (NDUFA11) (Bos taurus (Bovine)).